The sequence spans 147 residues: ATP synthase epsilon chain (147 aa).

Belongs to the ATPase epsilon chain family. F-type ATPases have 2 components, CF(1) - the catalytic core - and CF(0) - the membrane proton channel. CF(1) has five subunits: alpha(3), beta(3), gamma(1), delta(1), epsilon(1). CF(0) has three main subunits: a, b and c.

The protein resides in the cell inner membrane. Its function is as follows. Produces ATP from ADP in the presence of a proton gradient across the membrane. The chain is ATP synthase epsilon chain from Protochlamydia amoebophila (strain UWE25).